A 224-amino-acid polypeptide reads, in one-letter code: Urease accessory protein UreG (224 aa).

The span at 1–20 (MATHSHPHSHTVPARPRRVR) shows a compositional bias: basic residues. The tract at residues 1–25 (MATHSHPHSHTVPARPRRVRKPGEP) is disordered. 32-39 (GPVGSGKT) lines the GTP pocket.

It belongs to the SIMIBI class G3E GTPase family. UreG subfamily. Homodimer. UreD, UreF and UreG form a complex that acts as a GTP-hydrolysis-dependent molecular chaperone, activating the urease apoprotein by helping to assemble the nickel containing metallocenter of UreC. The UreE protein probably delivers the nickel.

The protein resides in the cytoplasm. Functionally, facilitates the functional incorporation of the urease nickel metallocenter. This process requires GTP hydrolysis, probably effectuated by UreG. The polypeptide is Urease accessory protein UreG (Mycobacterium bovis (strain ATCC BAA-935 / AF2122/97)).